The chain runs to 323 residues: Mitochondrial glutamate carrier 1 (323 aa).

Solcar repeat units lie at residues 6-93 (ISLP…FRHQ), 101-214 (LTLP…LNQL), and 223-312 (SPFY…GIAE). The next 6 helical transmembrane spans lie at 12-32 (LINGGIAGLIGVTCVFPIDLA), 62-82 (YFGMYRGAAVNLTLVTPEKAI), 107-127 (MLAGCGAGTCQVIVTTPMEML), 189-209 (GLGATLLRDVPFSIVYFPLFA), 223-243 (SPFYVSFLAGCVAGSAAAVAV), and 292-312 (ALVIAPLFGIAQVVYFLGIAE).

The protein belongs to the mitochondrial carrier (TC 2.A.29) family. Detected in insulin-secreting beta-cells and pancreatic islets (at the protein level).

The protein localises to the mitochondrion inner membrane. The catalysed reaction is L-glutamate(in) + H(+)(in) = L-glutamate(out) + H(+)(out). Functionally, mitochondrial glutamate/H(+) symporter. Responsible for the transport of glutamate from the cytosol into the mitochondrial matrix with the concomitant import of a proton. Plays a role in the control of glucose-stimulated insulin secretion. This chain is Mitochondrial glutamate carrier 1, found in Rattus norvegicus (Rat).